Here is a 105-residue protein sequence, read N- to C-terminus: Endogenous retrovirus group K member 16 Rec protein (105 aa).

A disordered region spans residues 1–41 (MNPSEMQRKAPPRRRRHRNRAPSSHKMNKMMMSEEQMKLPS). Basic residues predominate over residues 10–20 (APPRRRRHRNR). The short motif at 13 to 20 (RRRRHRNR) is the Nuclear localization signal element. The Nuclear export signal signature appears at 50–59 (WAQLNKLTQL).

As to quaternary structure, forms homodimers, homotrimers, and homotetramers via a C-terminal domain. Associates with XPO1 and with ZNF145.

The protein resides in the cytoplasm. The protein localises to the nucleus. It localises to the nucleolus. In terms of biological role, retroviral replication requires the nuclear export and translation of unspliced, singly-spliced and multiply-spliced derivatives of the initial genomic transcript. Rec interacts with a highly structured RNA element (RcRE) present in the viral 3'LTR and recruits the cellular nuclear export machinery. This permits export to the cytoplasm of unspliced genomic or incompletely spliced subgenomic viral transcripts. The chain is Endogenous retrovirus group K member 16 Rec protein (ERVK-16) from Homo sapiens (Human).